A 267-amino-acid chain; its full sequence is Auxin-responsive protein IAA18 (267 aa).

Residues 42–46 (LELKL) carry the EAR-like (transcriptional repression) motif. The tract at residues 81-101 (PSSTKTTSHKRTAPGPVVGWP) is disordered. Residues 149–248 (GMFVKINMYG…SVKRLRVIKT (100 aa)) form the PB1 domain.

Belongs to the Aux/IAA family. Homodimers and heterodimers. Interacts with TPL.

The protein localises to the nucleus. Its function is as follows. Aux/IAA proteins are short-lived transcriptional factors that function as repressors of early auxin response genes at low auxin concentrations. Repression is thought to result from the interaction with auxin response factors (ARFs), proteins that bind to the auxin-responsive promoter element (AuxRE). Formation of heterodimers with ARF proteins may alter their ability to modulate early auxin response genes expression. This Arabidopsis thaliana (Mouse-ear cress) protein is Auxin-responsive protein IAA18 (IAA18).